A 532-amino-acid chain; its full sequence is E3 ubiquitin-protein ligase ICP0 (532 aa).

Positions 8, 11, 24, 26, 29, 32, 43, and 46 each coordinate Zn(2+). An RING-type zinc finger spans residues 8-47 (CPICLEDPSNYSMALPCLHAFCYVCITRWIRQNPTCPLCK). Disordered stretches follow at residues 206-391 (EYID…PMRP), 406-426 (APRDSSTSEAAGPSRLGAGPR), 461-498 (EDESARRRGNVLLRPRRQSVPPVPYPDIASTSPLIRQG), and 510-532 (QTQPAEPEEMRCPHNCQRYRRNQ). 2 stretches are compositionally biased toward acidic residues: residues 217–227 (SEEETDSDIEV) and 234–243 (DPEDTSDETS). Over residues 286–295 (RSARLRRRQP) the composition is skewed to basic residues.

Post-translationally, auto-ubiquitinated.

It catalyses the reaction S-ubiquitinyl-[E2 ubiquitin-conjugating enzyme]-L-cysteine + [acceptor protein]-L-lysine = [E2 ubiquitin-conjugating enzyme]-L-cysteine + N(6)-ubiquitinyl-[acceptor protein]-L-lysine.. Its function is as follows. Evades nuclear antiviral defenses triggered by dsDNA viruses. Acts during the initial stages of lytic infection and the reactivation of latent viral genome. Prevents the antiviral effect of nuclear bodies by degrading host PML and SP100. This chain is E3 ubiquitin-protein ligase ICP0 (63), found in Equus caballus (Horse).